Here is a 161-residue protein sequence, read N- to C-terminus: DNA-directed RNA polymerase 18 kDa subunit (161 aa).

This sequence belongs to the poxviridae DNA-directed RNA polymerase 18 kDa subunit family. As to quaternary structure, the DNA-dependent RNA polymerase used for intermediate and late genes expression consists of eight subunits Rpo30/OPG66, Rpo7/OPG90, Rpo22/OPG103, Rpo147/OPG105, Rpo18/OPG119, Rpo19/OPG131, Rpo132/OPG151 and Rpo35/OPG156. The same holoenzyme, with the addition of the transcription-specificity factor OPG109, is used for early gene expression.

The protein resides in the virion. It carries out the reaction RNA(n) + a ribonucleoside 5'-triphosphate = RNA(n+1) + diphosphate. Functionally, part of the DNA-dependent RNA polymerase which catalyzes the transcription of viral DNA into RNA using the four ribonucleoside triphosphates as substrates. Responsible for the transcription of early, intermediate and late genes. DNA-dependent RNA polymerase associates with the early transcription factor (ETF), itself composed of OPG118 and OPG133, thereby allowing the early genes transcription. Late transcription, and probably also intermediate transcription, require newly synthesized RNA polymerase. The polypeptide is DNA-directed RNA polymerase 18 kDa subunit (OPG119) (Vaccinia virus (strain Copenhagen) (VACV)).